The chain runs to 60 residues: Small ribosomal subunit protein eS31 (60 aa).

The Zn(2+) site is built by C32, C35, C50, and C53. A C4-type zinc finger spans residues 32–53 (CPRCGAGVFMGEHKDRFSCGKC).

Belongs to the eukaryotic ribosomal protein eS31 family. Part of the 30S ribosomal subunit. The cofactor is Zn(2+).

The polypeptide is Small ribosomal subunit protein eS31 (Methanocorpusculum labreanum (strain ATCC 43576 / DSM 4855 / Z)).